We begin with the raw amino-acid sequence, 604 residues long: Ribosome-inactivating protein PMRIPm (604 aa).

An N-terminal signal peptide occupies residues 1–43 (MRVVAAILYINVVVALICGLGIQGGALDLQDYPSVSFQGDAMQ). E211 is a catalytic residue. 3 disulfide bridges follow: C301/C332, C348/C367, and C392/C409. 2 Ricin B-type lectin domains span residues 335-463 (GEPT…WRVG) and 466-598 (VEPI…WLTV). One copy of the 1-alpha repeat lies at 345 to 387 (AGWCVDVKDGRDNDGNPIQVLSCGDGQERKQQWTFHRDGTIRS). The 1-beta repeat unit spans residues 389-429 (LGKCMTAYGFKHGEYVMIYDCDTAIAGANKWVVSIDGTITN). One copy of the 1-gamma repeat lies at 432–465 (SGLVLTAPRGATGTTLLVEKNVHAARQCWRVGDD). The stretch at 477-521 (QEKCLEANYLENTNVSRYTKVFLDDCVLDRQQQRWALYSDGTIRA) is one 2-alpha repeat. A disulfide bridge connects residues C480 and C502. A glycan (N-linked (GlcNAc...) asparagine) is linked at N490. The stretch at 525–563 (RSLRVTADGHRSLDSIIILACKGWGNQRWVFNTDGTILN) is one 2-beta repeat. A 2-gamma repeat occupies 566–599 (AKLVMDVKDSDVSLLQIILHQSTGKPNQKWLTVT).

Belongs to the ribosome-inactivating protein family. Type 2 RIP subfamily. In terms of assembly, disulfide-linked dimer of A and B chains. The precursor is processed in two chains, A and B, that are linked by a disulfide bond. Post-translationally, glycosylated. In terms of processing, the N-terminus is blocked. In terms of tissue distribution, expressed in rhizome and abundantly in leaves (at protein level).

The catalysed reaction is Endohydrolysis of the N-glycosidic bond at one specific adenosine on the 28S rRNA.. Its activity is regulated as follows. Strongly inhibited by asialofetuin and asialomucin. Gal/GalNAc-specific agglutinin. Behaves as a type-2 ribosome-inactivating protein. Inhibits mammalian ribosomes. The A chain is responsible for inhibiting protein synthesis through the catalytic inactivation of 60S ribosomal subunits by removing adenine from position 4,324 of 28S rRNA. The B chain binds to cell receptors and probably facilitates the entry into the cell of the A chain; B chains are also responsible for cell agglutination (lectin activity). Involved in plant defense against insects. Has very low cytotoxic activity against the human tumor cell line Molt4, but higher against CEM. This Polygonatum multiflorum (Solomon's seal) protein is Ribosome-inactivating protein PMRIPm.